A 206-amino-acid chain; its full sequence is Thymidylate kinase (206 aa).

Position 11–18 (11–18) interacts with ATP; that stretch reads GIDGAGKT.

This sequence belongs to the thymidylate kinase family.

It catalyses the reaction dTMP + ATP = dTDP + ADP. Functionally, phosphorylation of dTMP to form dTDP in both de novo and salvage pathways of dTTP synthesis. The sequence is that of Thymidylate kinase from Burkholderia cenocepacia (strain HI2424).